A 212-amino-acid chain; its full sequence is Ribonuclease HII (212 aa).

The 194-residue stretch at 19–212 (CIIVGVDEVG…SKISYMFKNS (194 aa)) folds into the RNase H type-2 domain. Residues Asp-25, Glu-26, and Asp-120 each coordinate a divalent metal cation.

This sequence belongs to the RNase HII family. Mn(2+) serves as cofactor. It depends on Mg(2+) as a cofactor.

It localises to the cytoplasm. The enzyme catalyses Endonucleolytic cleavage to 5'-phosphomonoester.. Its function is as follows. Endonuclease that specifically degrades the RNA of RNA-DNA hybrids. This Ehrlichia ruminantium (strain Welgevonden) protein is Ribonuclease HII.